We begin with the raw amino-acid sequence, 217 residues long: ATP phosphoribosyltransferase (217 aa).

The protein belongs to the ATP phosphoribosyltransferase family. Short subfamily. As to quaternary structure, heteromultimer composed of HisG and HisZ subunits.

Its subcellular location is the cytoplasm. The catalysed reaction is 1-(5-phospho-beta-D-ribosyl)-ATP + diphosphate = 5-phospho-alpha-D-ribose 1-diphosphate + ATP. Its pathway is amino-acid biosynthesis; L-histidine biosynthesis; L-histidine from 5-phospho-alpha-D-ribose 1-diphosphate: step 1/9. In terms of biological role, catalyzes the condensation of ATP and 5-phosphoribose 1-diphosphate to form N'-(5'-phosphoribosyl)-ATP (PR-ATP). Has a crucial role in the pathway because the rate of histidine biosynthesis seems to be controlled primarily by regulation of HisG enzymatic activity. The chain is ATP phosphoribosyltransferase from Parasynechococcus marenigrum (strain WH8102).